The chain runs to 165 residues: Nutritionally-regulated adipose and cardiac-enriched protein (165 aa).

The interval 1 to 47 (MRSAARVSRSNSHPRTRHPTRENEGTTWGSQPSRTERDGDRKCPPSI) is disordered. The segment covering 34–43 (RTERDGDRKC) has biased composition (basic and acidic residues). A helical transmembrane segment spans residues 112–132 (GSLFLWLTLCALLGVVLVLYC).

In terms of tissue distribution, predominantly expressed in white adipose tissue (at protein level) and brown adipose tissue. Also detected in heart.

It localises to the cell membrane. The chain is Nutritionally-regulated adipose and cardiac-enriched protein (Nrac) from Mus musculus (Mouse).